We begin with the raw amino-acid sequence, 357 residues long: NADH-quinone oxidoreductase subunit H (357 aa).

The next 8 helical transmembrane spans lie at 22 to 42, 94 to 114, 130 to 150, 164 to 184, 199 to 219, 254 to 274, 294 to 314, and 333 to 353; these read VAII…LMLV, IYLF…VWAV, LLYV…AGWA, AALL…VVMI, GGII…FFIS, FFLA…IMFF, IPGM…YLWV, and VFLP…QLQL.

The protein belongs to the complex I subunit 1 family. NDH-1 is composed of 14 different subunits. Subunits NuoA, H, J, K, L, M, N constitute the membrane sector of the complex.

It localises to the cell inner membrane. The catalysed reaction is a quinone + NADH + 5 H(+)(in) = a quinol + NAD(+) + 4 H(+)(out). In terms of biological role, NDH-1 shuttles electrons from NADH, via FMN and iron-sulfur (Fe-S) centers, to quinones in the respiratory chain. The immediate electron acceptor for the enzyme in this species is believed to be ubiquinone. Couples the redox reaction to proton translocation (for every two electrons transferred, four hydrogen ions are translocated across the cytoplasmic membrane), and thus conserves the redox energy in a proton gradient. This subunit may bind ubiquinone. The sequence is that of NADH-quinone oxidoreductase subunit H from Vesicomyosocius okutanii subsp. Calyptogena okutanii (strain HA).